The primary structure comprises 387 residues: Signal-regulatory protein gamma (387 aa).

An N-terminal signal peptide occupies residues methionine 1–glycine 28. In terms of domain architecture, Ig-like V-type spans glutamate 29–glycine 137. The Extracellular segment spans residues glutamate 29–proline 360. 2 disulfides stabilise this stretch: cysteine 53–cysteine 119 and cysteine 168–cysteine 226. Ig-like C1-type domains follow at residues proline 146 to serine 245 and proline 252 to serine 340. N-linked (GlcNAc...) asparagine glycosylation is found at asparagine 243, asparagine 268, asparagine 309, and asparagine 317. A disulfide bridge connects residues cysteine 271 and cysteine 329. Residues glycine 361–tryptophan 383 form a helical membrane-spanning segment. The Cytoplasmic segment spans residues lysine 384–threonine 387.

As to quaternary structure, interacts with CD47. As to expression, detected in liver, and at very low levels in brain, heart, lung, pancreas, kidney, placenta and skeletal muscle. Expressed on CD4+ T-cells, CD8+ T-cells, CD56-bright natural killer (NK) cells, CD20+ cells, and all activated NK cells. Mainly present in the paracortical T-cell area of lymph nodes, with only sparse positive cells in the mantle and in the germinal center of B-cell follicles. In the thymus, primarily expressed in the medulla on mature T-lymphocytes that have undergone thymic selection.

The protein resides in the membrane. In terms of biological role, probable immunoglobulin-like cell surface receptor. On binding with CD47, mediates cell-cell adhesion. Engagement on T-cells by CD47 on antigen-presenting cells results in enhanced antigen-specific T-cell proliferation and costimulates T-cell activation. The protein is Signal-regulatory protein gamma (SIRPG) of Homo sapiens (Human).